A 122-amino-acid chain; its full sequence is Large ribosomal subunit protein uL14 (122 aa).

This sequence belongs to the universal ribosomal protein uL14 family. Part of the 50S ribosomal subunit. Forms a cluster with proteins L3 and L19. In the 70S ribosome, L14 and L19 interact and together make contacts with the 16S rRNA in bridges B5 and B8.

Binds to 23S rRNA. Forms part of two intersubunit bridges in the 70S ribosome. In Borreliella burgdorferi (strain ZS7) (Borrelia burgdorferi), this protein is Large ribosomal subunit protein uL14.